The chain runs to 206 residues: IMPACT family member HI_0722 (206 aa).

It belongs to the IMPACT family.

This Haemophilus influenzae (strain ATCC 51907 / DSM 11121 / KW20 / Rd) protein is IMPACT family member HI_0722.